A 227-amino-acid polypeptide reads, in one-letter code: 4'-phosphopantetheinyl transferase PptT (227 aa).

CoA-binding positions include Arg48, Arg56, 75 to 78, 92 to 93, and Asp114; these read KGDK and TH. Positions 114, 115, and 116 each coordinate Mg(2+). Residues Glu157, Lys161, and Leu171 each contribute to the CoA site.

The protein belongs to the P-Pant transferase superfamily. It depends on Mg(2+) as a cofactor.

The catalysed reaction is apo-[ACP] + CoA = holo-[ACP] + adenosine 3',5'-bisphosphate + H(+). Inhibited by the amidino-urea compound 1-[(2,6-diethylphenyl)-3-N-ethylcarbamimodoyl]urea (compound 8918). It acts by binding to the phosphopantetheine pocket in the active site. Inhibition by compound 8918 kills M.tuberculosis. Transfers the 4'-phosphopantetheine moiety from coenzyme A to a Ser of acyl-carrier-protein. Involved in post-translational modification of various type-I polyketide synthases required for the formation of both mycolic acids and lipid virulence factors. Acts on Pks13, Mas, PpsA, PpsB, PpsC and PpsD. Also acts on AcpM, the meromycolate extension acyl carrier protein. In addition, is involved in the activation of the acyl carrier protein MbtL and the nonribosomal peptides synthases MbtB and MbtE, which are involved in the biosynthesis of the siderophore mycobactin. In terms of biological role, required for the replication and survival of Mycobacterium during the acute and chronic phases of infection in mice. The protein is 4'-phosphopantetheinyl transferase PptT of Mycobacterium tuberculosis (strain ATCC 25618 / H37Rv).